Reading from the N-terminus, the 628-residue chain is (+)-alpha-pinene synthase, chloroplastic (628 aa).

The N-terminal 48 residues, 1 to 48 (MALVSAVPLNSKLCLRRTLFGFSHELKAIHSTVPNLGMCRGGKSIAPS), are a transit peptide targeting the chloroplast. D379, D383, and D531 together coordinate Mg(2+). A DDXXD motif motif is present at residues 379–383 (DDIYD). S539 is a K(+) binding site.

It belongs to the terpene synthase family. Tpsd subfamily. The cofactor is Mg(2+). Mn(2+) is required as a cofactor. K(+) serves as cofactor.

The protein localises to the plastid. It localises to the chloroplast. The catalysed reaction is (2E)-geranyl diphosphate = (1R,5R)-alpha-pinene + diphosphate. It functions in the pathway terpene metabolism; oleoresin biosynthesis. Involved in defensive oleoresin formation in conifers in response to insect attack or other injury. Involved in monoterpene (C10) olefins biosynthesis. Produces mainly (+)-alpha-pinene (97%) with a small amount of (-)-alpha-pinene (3%). The protein is (+)-alpha-pinene synthase, chloroplastic (PT30) of Pinus taeda (Loblolly pine).